Reading from the N-terminus, the 226-residue chain is Ribonuclease 3 (226 aa).

Positions 6–128 constitute an RNase III domain; that stretch reads TKKIQKVLGY…LIGSIYLDSN (123 aa). Glu41 contributes to the Mg(2+) binding site. The active site involves Asp45. Residues Asn114 and Glu117 each contribute to the Mg(2+) site. Glu117 is an active-site residue. Residues 155–225 form the DRBM domain; sequence DPKTRLQEYL…AQKALIKLGV (71 aa).

Belongs to the ribonuclease III family. In terms of assembly, homodimer. Mg(2+) serves as cofactor.

The protein resides in the cytoplasm. The enzyme catalyses Endonucleolytic cleavage to 5'-phosphomonoester.. In terms of biological role, digests double-stranded RNA. Involved in the processing of primary rRNA transcript to yield the immediate precursors to the large and small rRNAs (23S and 16S). Processes some mRNAs, and tRNAs when they are encoded in the rRNA operon. Processes pre-crRNA and tracrRNA of type II CRISPR loci if present in the organism. This chain is Ribonuclease 3, found in Buchnera aphidicola subsp. Acyrthosiphon pisum (strain 5A).